A 232-amino-acid polypeptide reads, in one-letter code: Small ribosomal subunit protein uS3 (232 aa).

The KH type-2 domain occupies 39–107; sequence VRQFLTKELS…PAQINIAEVR (69 aa).

Belongs to the universal ribosomal protein uS3 family. Part of the 30S ribosomal subunit. Forms a tight complex with proteins S10 and S14.

Functionally, binds the lower part of the 30S subunit head. Binds mRNA in the 70S ribosome, positioning it for translation. The sequence is that of Small ribosomal subunit protein uS3 from Sodalis glossinidius (strain morsitans).